The following is a 162-amino-acid chain: Type IV major fimbrial protein FimA (162 aa).

Positions 1–7 (MKSLQKG) are cleaved as a propeptide — leader sequence. Phenylalanine 8 bears the N-methylphenylalanine mark. The chain crosses the membrane as a helical span at residues 8-28 (FTLIELMIVVAIIGILAAFAI). Cysteine 63 and cysteine 106 are joined by a disulfide.

Belongs to the N-Me-Phe pilin family.

It is found in the fimbrium. The protein localises to the membrane. Its function is as follows. Major component of the type IV fimbriae that plays an essential role in twitching motility, natural transformation, and protease secretion. This Dichelobacter nodosus (strain VCS1703A) protein is Type IV major fimbrial protein FimA (fimA).